An 85-amino-acid chain; its full sequence is Translation initiation factor IF-1 (85 aa).

The region spanning 1–72 is the S1-like domain; sequence MAKEELIEMH…SKGRITFRHI (72 aa).

This sequence belongs to the IF-1 family. As to quaternary structure, component of the 30S ribosomal translation pre-initiation complex which assembles on the 30S ribosome in the order IF-2 and IF-3, IF-1 and N-formylmethionyl-tRNA(fMet); mRNA recruitment can occur at any time during PIC assembly.

Its subcellular location is the cytoplasm. Its function is as follows. One of the essential components for the initiation of protein synthesis. Stabilizes the binding of IF-2 and IF-3 on the 30S subunit to which N-formylmethionyl-tRNA(fMet) subsequently binds. Helps modulate mRNA selection, yielding the 30S pre-initiation complex (PIC). Upon addition of the 50S ribosomal subunit IF-1, IF-2 and IF-3 are released leaving the mature 70S translation initiation complex. This is Translation initiation factor IF-1 from Polaromonas naphthalenivorans (strain CJ2).